The sequence spans 279 residues: NADPH-dependent 7-cyano-7-deazaguanine reductase (279 aa).

86 to 88 is a substrate binding site; sequence IES. 88–89 contributes to the NADPH binding site; that stretch reads SK. Cys-187 functions as the Thioimide intermediate in the catalytic mechanism. Residue Asp-194 is the Proton donor of the active site. 226-227 provides a ligand contact to substrate; the sequence is HE. 255–256 lines the NADPH pocket; it reads RG.

Belongs to the GTP cyclohydrolase I family. QueF type 2 subfamily. As to quaternary structure, homodimer.

Its subcellular location is the cytoplasm. The enzyme catalyses 7-aminomethyl-7-carbaguanine + 2 NADP(+) = 7-cyano-7-deazaguanine + 2 NADPH + 3 H(+). Its pathway is tRNA modification; tRNA-queuosine biosynthesis. Catalyzes the NADPH-dependent reduction of 7-cyano-7-deazaguanine (preQ0) to 7-aminomethyl-7-deazaguanine (preQ1). The polypeptide is NADPH-dependent 7-cyano-7-deazaguanine reductase (Haemophilus influenzae (strain ATCC 51907 / DSM 11121 / KW20 / Rd)).